The primary structure comprises 995 residues: UPF0182 protein MUL_2505 (995 aa).

The next 7 helical transmembrane spans lie at 18-38 (VLIL…RLID), 63-83 (FLVF…GLAL), 113-133 (LFGI…AQSY), 175-195 (FVAI…FGGI), 210-230 (IQLV…YWLN), 259-279 (KLIL…AIVL), and 287-307 (IGLV…PMIV). A disordered region spans residues 900 to 947 (AATGIQPTEGGAPANVPPNNAPSPEALPGTPPSPPTAVPPAPEASVTL). Residues 928 to 941 (GTPPSPPTAVPPAP) show a composition bias toward pro residues.

Belongs to the UPF0182 family.

Its subcellular location is the cell membrane. The polypeptide is UPF0182 protein MUL_2505 (Mycobacterium ulcerans (strain Agy99)).